The primary structure comprises 399 residues: Tryptophan synthase beta chain (399 aa).

K92 carries the N6-(pyridoxal phosphate)lysine modification.

The protein belongs to the TrpB family. As to quaternary structure, tetramer of two alpha and two beta chains. Requires pyridoxal 5'-phosphate as cofactor.

It catalyses the reaction (1S,2R)-1-C-(indol-3-yl)glycerol 3-phosphate + L-serine = D-glyceraldehyde 3-phosphate + L-tryptophan + H2O. The protein operates within amino-acid biosynthesis; L-tryptophan biosynthesis; L-tryptophan from chorismate: step 5/5. The beta subunit is responsible for the synthesis of L-tryptophan from indole and L-serine. This chain is Tryptophan synthase beta chain, found in Thiobacillus denitrificans (strain ATCC 25259 / T1).